Here is a 346-residue protein sequence, read N- to C-terminus: D-fructose 1,6-bisphosphatase class 2/sedoheptulose 1,7-bisphosphatase 1 (346 aa).

Residues Asp-33, Glu-57, Asp-97, and Glu-100 each contribute to the Mn(2+) site. Residues 100–102 (EGT), Tyr-131, 176–178 (RAR), and 198–200 (DGD) each bind substrate. Position 225 (Glu-225) interacts with Mn(2+).

Belongs to the FBPase class 2 family. Homotetramer. Mn(2+) is required as a cofactor.

It catalyses the reaction beta-D-fructose 1,6-bisphosphate + H2O = beta-D-fructose 6-phosphate + phosphate. The enzyme catalyses D-sedoheptulose 1,7-bisphosphate + H2O = D-sedoheptulose 7-phosphate + phosphate. Its pathway is carbohydrate biosynthesis; Calvin cycle. In terms of biological role, catalyzes the hydrolysis of fructose 1,6-bisphosphate (Fru 1,6-P2) and sedoheptulose 1,7-bisphosphate (Sed 1,7-P2) to fructose 6-phosphate and sedoheptulose 7-phosphate, respectively. In Acaryochloris marina (strain MBIC 11017), this protein is D-fructose 1,6-bisphosphatase class 2/sedoheptulose 1,7-bisphosphatase 1.